A 283-amino-acid chain; its full sequence is MCNTPTYCDLGKAAKDVFNKGYGFGMVKIDLKTKSCSGVEFSTSGHAYTDTGKASGNLETKYKVCNYGLTFTQKWNTDNTLGTEISWENKLAEGLKLTLDTIFVPNTGKKSGKLKASYKRDCFSVGSNVDIDFSGPTIYGWAVLAFEGWLAGYQMSFDTAKSKLSQNNFALGYKAADFQLHTHVNDGTEFGGSIYQKVNEKIETSINLAWTAGSNNTRFGIAAKYMLDCRTSLSAKVNNASLIGLGYTQTLRPGVKLTLSALIDGKNFSAGGHKVGLGFELEA.

Residue C2 is modified to N-acetylcysteine. T4 carries the post-translational modification Phosphothreonine. N6-acetyllysine is present on residues K12, K15, and K20. 2 consecutive transmembrane segments (beta stranded) span residues 26-35 (MVKIDLKTKS) and 39-47 (VEFSTSGHA). Residues K53 and K61 each participate in a glycyl lysine isopeptide (Lys-Gly) (interchain with G-Cter in ubiquitin) cross-link. 3 consecutive transmembrane segments (beta stranded) span residues 54–64 (ASGNLETKYKV), 69–76 (LTFTQKWN), and 80–89 (TLGTEISWEN). K90 is modified (N6-acetyllysine). Residues 95-104 (LKLTLDTIFV) traverse the membrane as a beta stranded segment. Glycyl lysine isopeptide (Lys-Gly) (interchain with G-Cter in ubiquitin) cross-links involve residues K109 and K110. The next 10 beta stranded transmembrane spans lie at 111–120 (SGKLKASYKR), 123–130 (FSVGSNVD), 137–145 (TIYGWAVLA), 150–158 (LAGYQMSFD), 163–175 (KLSQ…GYKA), 178–185 (FQLHTHVN), 189–198 (EFGGSIYQKV), 202–211 (IETSINLAWT), 218–227 (RFGIAAKYML), and 231–238 (TSLSAKVN). K163 participates in a covalent cross-link: Glycyl lysine isopeptide (Lys-Gly) (interchain with G-Cter in ubiquitin). Residue S241 is modified to Phosphoserine. NAD(+) is bound by residues 242-244 (LIG) and 260-264 (SALID). The next 2 beta stranded transmembrane spans lie at 242-251 (LIGLGYTQTL) and 254-263 (GVKLTLSALI). At K266 the chain carries N6-acetyllysine; alternate. Residue K266 forms a Glycyl lysine isopeptide (Lys-Gly) (interchain with G-Cter in ubiquitin); alternate linkage. Residues 273–282 (HKVGLGFELE) form a beta stranded membrane-spanning segment. Residue K274 forms a Glycyl lysine isopeptide (Lys-Gly) (interchain with G-Cter in ubiquitin) linkage.

This sequence belongs to the eukaryotic mitochondrial porin family. Interacts with ARMC12 in a TBC1D21-dependent manner. Interacts with MISFA. Ubiquitinated by PRKN during mitophagy, leading to its degradation and enhancement of mitophagy. Deubiquitinated by USP30. As to expression, expressed in erythrocytes (at protein level). Widely expressed. Highest in testis.

Its subcellular location is the mitochondrion outer membrane. It localises to the membrane. It carries out the reaction chloride(in) = chloride(out). The catalysed reaction is K(+)(in) = K(+)(out). In terms of biological role, non-selective voltage-gated ion channel that mediates the transport of anions and cations through the mitochondrion outer membrane and plasma membrane. Forms a high-conducting channel with a stable open state and a voltage-induced closure with a mild preference for anions over cations. Involved in male fertility and sperm mitochondrial sheath formation. This Homo sapiens (Human) protein is Non-selective voltage-gated ion channel VDAC3.